The chain runs to 836 residues: Translation initiation factor IF-2 (836 aa).

Over residues 1–17 (MLRLMRQKKLSIQRRTK) the composition is skewed to basic residues. Disordered regions lie at residues 1–43 (MLRL…RTVK) and 83–240 (AAKK…KGAA). The span at 18–27 (TTVSSTTTGG) shows a compositional bias: low complexity. The segment covering 83–153 (AAKKEADEKV…AAEEAKRYAE (71 aa)) has biased composition (basic and acidic residues). The segment covering 154-167 (ADDSDNESSSEDYS) has biased composition (acidic residues). Over residues 192 to 202 (RGKNKVAKAKK) the composition is skewed to basic residues. The span at 203–229 (GGRDDENSKNSKNERESNRKNQKDAKF) shows a compositional bias: basic and acidic residues. Residues 335 to 505 (TRAPVVTIMG…LLQSEVLELT (171 aa)) enclose the tr-type G domain. Positions 344–351 (GHVDHGKT) are G1. Residue 344 to 351 (GHVDHGKT) coordinates GTP. A G2 region spans residues 369-373 (GITQH). The tract at residues 391 to 394 (DTPG) is G3. GTP contacts are provided by residues 391 to 395 (DTPGH) and 445 to 448 (NKID). The interval 445 to 448 (NKID) is G4. The G5 stretch occupies residues 481–483 (SAK).

It belongs to the TRAFAC class translation factor GTPase superfamily. Classic translation factor GTPase family. IF-2 subfamily.

The protein resides in the cytoplasm. In terms of biological role, one of the essential components for the initiation of protein synthesis. Protects formylmethionyl-tRNA from spontaneous hydrolysis and promotes its binding to the 30S ribosomal subunits. Also involved in the hydrolysis of GTP during the formation of the 70S ribosomal complex. This is Translation initiation factor IF-2 from Haemophilus influenzae (strain PittEE).